A 208-amino-acid chain; its full sequence is CKLF-like MARVEL transmembrane domain-containing protein 4 (208 aa).

A compositionally biased stretch (acidic residues) spans 1-11 (MRGGEELDGFE). Residues 1–38 (MRGGEELDGFEGEASSTSMISGASSPYQPTTEPVSQRR) form a disordered region. A compositionally biased stretch (low complexity) spans 15-25 (SSTSMISGASS). An MARVEL domain is found at 49–176 (YLRGALGRLK…STFLAMQKWR (128 aa)). Helical transmembrane passes span 59–79 (VAQVILALIAFICIETIMECS), 85–105 (YFFEFVSCSAFVVTGVLLILF), 123–143 (LVNTGLSTFFFFIASIVLAAL), and 151–171 (IAAVIFGFLATAAYAVSTFLA). S194 bears the Phosphoserine mark.

This sequence belongs to the chemokine-like factor family. Interacts with PD1L1 and CMTM6.

The protein resides in the membrane. Its function is as follows. Acts as a backup for CMTM6 to regulate plasma membrane expression of PD-L1/CD274, an immune inhibitory ligand critical for immune tolerance to self and antitumor immunity. May protect PD-L1/CD274 from being polyubiquitinated and targeted for degradation. This chain is CKLF-like MARVEL transmembrane domain-containing protein 4, found in Mus musculus (Mouse).